An 88-amino-acid polypeptide reads, in one-letter code: Small ribosomal subunit protein uS15 (88 aa).

Belongs to the universal ribosomal protein uS15 family. As to quaternary structure, part of the 30S ribosomal subunit. Forms a bridge to the 50S subunit in the 70S ribosome, contacting the 23S rRNA.

In terms of biological role, one of the primary rRNA binding proteins, it binds directly to 16S rRNA where it helps nucleate assembly of the platform of the 30S subunit by binding and bridging several RNA helices of the 16S rRNA. Its function is as follows. Forms an intersubunit bridge (bridge B4) with the 23S rRNA of the 50S subunit in the ribosome. The polypeptide is Small ribosomal subunit protein uS15 (Mycoplasmopsis pulmonis (strain UAB CTIP) (Mycoplasma pulmonis)).